A 662-amino-acid polypeptide reads, in one-letter code: Transketolase (662 aa).

His-28 serves as a coordination point for substrate. Thiamine diphosphate is bound by residues His-68 and Gly-115–Leu-117. Asp-156 serves as a coordination point for Mg(2+). The thiamine diphosphate site is built by Gly-157 and Asn-186. The Mg(2+) site is built by Asn-186 and Ile-188. Substrate-binding residues include His-261, Arg-356, and Ser-383. His-261 contributes to the thiamine diphosphate binding site. Glu-410 (proton donor) is an active-site residue. Phe-436 is a thiamine diphosphate binding site. Residues His-460, Asp-468, and Arg-519 each coordinate substrate.

Belongs to the transketolase family. Homodimer. Mg(2+) serves as cofactor. Requires Ca(2+) as cofactor. It depends on Mn(2+) as a cofactor. Co(2+) is required as a cofactor. The cofactor is thiamine diphosphate.

It carries out the reaction D-sedoheptulose 7-phosphate + D-glyceraldehyde 3-phosphate = aldehydo-D-ribose 5-phosphate + D-xylulose 5-phosphate. Its pathway is carbohydrate biosynthesis; Calvin cycle. The protein operates within carbohydrate degradation; pentose phosphate pathway. Its function is as follows. Catalyzes the transfer of a two-carbon ketol group from a ketose donor to an aldose acceptor, via a covalent intermediate with the cofactor thiamine pyrophosphate. This Staphylococcus aureus (strain COL) protein is Transketolase (tkt).